Consider the following 245-residue polypeptide: 1-(5-phosphoribosyl)-5-[(5-phosphoribosylamino)methylideneamino] imidazole-4-carboxamide isomerase (245 aa).

The active-site Proton acceptor is Asp8. The Proton donor role is filled by Asp129.

Belongs to the HisA/HisF family.

The protein localises to the cytoplasm. It catalyses the reaction 1-(5-phospho-beta-D-ribosyl)-5-[(5-phospho-beta-D-ribosylamino)methylideneamino]imidazole-4-carboxamide = 5-[(5-phospho-1-deoxy-D-ribulos-1-ylimino)methylamino]-1-(5-phospho-beta-D-ribosyl)imidazole-4-carboxamide. It functions in the pathway amino-acid biosynthesis; L-histidine biosynthesis; L-histidine from 5-phospho-alpha-D-ribose 1-diphosphate: step 4/9. The chain is 1-(5-phosphoribosyl)-5-[(5-phosphoribosylamino)methylideneamino] imidazole-4-carboxamide isomerase from Rhodopseudomonas palustris (strain BisA53).